Reading from the N-terminus, the 486-residue chain is LON peptidase N-terminal domain and RING finger protein C14F5.10c (486 aa).

The RING-type zinc finger occupies 169 to 207 (CQICFGMLYDPVVSPCGHTFCGPCLMQALTQSPQCPTCR). Residues 250-472 (ESWLPLFISM…LVLIWLTQLQ (223 aa)) enclose the Lon N-terminal domain.

This Schizosaccharomyces pombe (strain 972 / ATCC 24843) (Fission yeast) protein is LON peptidase N-terminal domain and RING finger protein C14F5.10c.